Here is a 489-residue protein sequence, read N- to C-terminus: UDP-N-acetylmuramoyl-L-alanyl-D-glutamate--2,6-diaminopimelate ligase (489 aa).

Ser-30 contacts UDP-N-acetyl-alpha-D-muramoyl-L-alanyl-D-glutamate. Gly-108 to Thr-114 lines the ATP pocket. Residues Asn-149, Thr-150–Thr-151, Ser-177, Gln-183, and Arg-185 each bind UDP-N-acetyl-alpha-D-muramoyl-L-alanyl-D-glutamate. The residue at position 217 (Lys-217) is an N6-carboxylysine. Residues Arg-383, Asp-407 to Arg-410, Gly-459, and Glu-463 each bind meso-2,6-diaminopimelate. The Meso-diaminopimelate recognition motif signature appears at Asp-407 to Arg-410.

The protein belongs to the MurCDEF family. MurE subfamily. It depends on Mg(2+) as a cofactor. Post-translationally, carboxylation is probably crucial for Mg(2+) binding and, consequently, for the gamma-phosphate positioning of ATP.

It localises to the cytoplasm. The enzyme catalyses UDP-N-acetyl-alpha-D-muramoyl-L-alanyl-D-glutamate + meso-2,6-diaminopimelate + ATP = UDP-N-acetyl-alpha-D-muramoyl-L-alanyl-gamma-D-glutamyl-meso-2,6-diaminopimelate + ADP + phosphate + H(+). It functions in the pathway cell wall biogenesis; peptidoglycan biosynthesis. Its function is as follows. Catalyzes the addition of meso-diaminopimelic acid to the nucleotide precursor UDP-N-acetylmuramoyl-L-alanyl-D-glutamate (UMAG) in the biosynthesis of bacterial cell-wall peptidoglycan. This Geobacillus kaustophilus (strain HTA426) protein is UDP-N-acetylmuramoyl-L-alanyl-D-glutamate--2,6-diaminopimelate ligase.